The primary structure comprises 363 residues: Adenosine 3'-phospho 5'-phosphosulfate transporter 2 (363 aa).

Transmembrane regions (helical) follow at residues 39-59, 63-83, 106-126, 131-151, 157-177, 187-206, 231-251, 257-277, 281-301, and 310-330; these read WLQF…YGYM, IFKL…QFVI, IYGV…ASVG, PTQV…GILI, GWID…FTLA, SRGY…IGNI, VFIF…PFFL, TFGY…VVLT, VFGA…TIIL, and FTIE…LNLY.

It belongs to the nucleotide-sugar transporter family. SLC35B subfamily.

The protein localises to the golgi apparatus membrane. Mediates the transport of adenosine 3'-phospho 5'-phosphosulfate (PAPS), from cytosol into Golgi. PAPS is a universal sulfuryl donor for sulfation events that take place in the Golgi. This chain is Adenosine 3'-phospho 5'-phosphosulfate transporter 2 (pst-2), found in Caenorhabditis briggsae.